The chain runs to 207 residues: Putative 3-methyladenine DNA glycosylase (207 aa).

The protein belongs to the DNA glycosylase MPG family.

This is Putative 3-methyladenine DNA glycosylase from Listeria monocytogenes serotype 4b (strain CLIP80459).